The following is a 354-amino-acid chain: Interferon-inducible protein AIM2 (354 aa).

Residues 1-87 (MESEYREMLL…ANALEEKKKE (87 aa)) enclose the Pyrin domain. A disordered region spans residues 95–124 (NTKKRGTQKVENRSQAENCSAASATRSDND). The span at 109–120 (QAENCSAASATR) shows a compositional bias: polar residues. Positions 144–341 (MVAEQEAIRE…SGPCSFFKVI (198 aa)) constitute an HIN-200 domain.

The protein belongs to the HIN-200 family. Self-associates; forms homooligomers in response to cytosolic double-stranded DNA (dsDNA) and the dsDNA seems to serve as oligomerization platform. Component of AIM2 inflammasome, which consists of a signal sensor component (AIM2), an adapter (PYCARD/ASC), which recruits an effector pro-inflammatory caspase (CASP1). Interacts (via pyrin domain) with PYCARD/ASC (via pyrin domain); interaction is direct. Component of the AIM2 PANoptosome complex, a multiprotein complex that drives inflammatory cell death (PANoptosis). Interacts with EIF2AK2/PKR. Interacts with MAPRE1. Interacts (via HIN-200 domain) with IFI202 (via HIN-200 domain 2); preventing activation of the AIM2 inflammasome. Interacts with RACK1; promoting association with PP2A phosphatase and dephosphorylation of AKT1. Interacts with TRIM11; promoting AIM2 recruitment to autophagosomes and autophagy-dependent degradation. Post-translationally, degraded via selective autophagy following interaction with TRIM11. As to expression, expressed in developing neurons. Highly expressed in regulatory T-cells (Treg).

It localises to the cytoplasm. Its subcellular location is the inflammasome. The protein localises to the nucleus. Inactive in absence of double-stranded DNA (dsDNA). Homooligomerizes upon binding to dsDNA, dsDNA serving as an oligomerization platform. AIM2 requires large dsDNA to generate a structural template that couples dsDNA ligand-binding and homooligomerization. Homooligomerization is followed by recruitment of PYCARD/ASC to initiate speck formation (nucleation). AIM2 and PYCARD/ASC homooligomer filaments assemble bidirectionally and the recognition between AIM2 and PYCARD/ASC oligomers occurs in a head-to-tail manner. Clustered PYCARD/ASC nucleates the formation of CASP1 filaments through the interaction of their respective CARD domains, acting as a platform for CASP1 polymerization and activation. Active CASP1 then specifically processes protein precursors, such as gasdermin-D (GSDMD), IL1B and IL18, leading to the release of mature cytokines in the extracellular milieu or pyroptosis, depending on cell type. AIM2 can be activated in response to events that cause genomic DNA (HIV protease inhibitor nelfinavir) or mitochondrial DNA release in the cytoplasm (such as Perfluoroalkyl substance pollutants or cholesterol overload). Activation of the AIM2 inflammasome is inhibited by IFI202. Activation of the AIM2 inflammasome is inhibited by TRIM11, which promotes autophagy-dependent degradation of AIM2. Sensor component of the AIM2 inflammasome, which mediates inflammasome activation in response to the presence of double-stranded DNA (dsDNA) in the cytosol, leading to subsequent pyroptosis. Inflammasomes are supramolecular complexes that assemble in the cytosol in response to pathogens and other damage-associated signals and play critical roles in innate immunity and inflammation. Acts as a recognition receptor (PRR): specifically recognizes and binds dsDNA in the cytosol, and mediates the formation of the inflammasome polymeric complex composed of AIM2, CASP1 and PYCARD/ASC. Recruitment of pro-caspase-1 (proCASP1) to the AIM2 inflammasome promotes caspase-1 (CASP1) activation, which subsequently cleaves and activates inflammatory cytokines IL1B and IL18 and gasdermin-D (GSDMD), promoting cytokine secretion. In some cells, CASP1 activation mediates cleavage and activation of GSDMD, triggering pyroptosis without promoting cytokine secretion. Detects cytosolic dsDNA of viral and bacterial origin in a non-sequence-specific manner. Involved in the DNA damage response caused by acute ionizing radiation by mediating pyroptosis of intestinal epithelial cells and bone marrow cells in response to double-strand DNA breaks. Mechanistically, AIM2 senses DNA damage in the nucleus to mediate inflammasome assembly and inflammatory cell death. Also acts as a regulator of neurodevelopment via its role in the DNA damage response: acts by promoting neural cell death in response to DNA damage in the developing brain, thereby purging genetically compromised cells of the central nervous system. Pyroptosis mediated by the AIM2 inflammasome in response to DNA damage is dependent on GSDMD without involving IL1B and IL18 cytokine secretion. Also acts as a mediator of pyroptosis, necroptosis and apoptosis (PANoptosis), an integral part of host defense against pathogens, in response to bacterial infection. Can also trigger PYCARD/ASC-dependent, caspase-1-independent cell death that involves caspase-8 (CASP8). Its function is as follows. Also acts as a tumor suppressor independently of its role in inflammatory response. Able to suppress overt cell proliferation in enterocytes: restricts stem cell proliferation in the intestinal mucosa in an inflammasome-independent manner, contributing to a decrease in the likelihood of colorectal cancer development. AIM2 suppresses cell proliferation by inhibiting phosphorylation of AKT1 at 'Ser-473', preventing AKT1 activation and AKT-mTOR signaling pathway. Inhibits AKT1 phosphorylation both by inhibiting the activity of PRKDC/DNA-PK kinase and promoting dephosphorylation by PP2A phosphatase. Also acts as a key regulator of regulatory T-cells (Treg) homeostasis by promoting their stability: acts by preventing AKT1 activation. Its role in Treg homeostasis is important to restain autoimmune diseases. This chain is Interferon-inducible protein AIM2, found in Mus musculus (Mouse).